A 190-amino-acid chain; its full sequence is Dynactin subunit 6 (190 aa).

The residue at position 186 (Thr186) is a Phosphothreonine; by CDK1.

The protein belongs to the dynactin subunits 5/6 family. Dynactin subunit 6 subfamily. Subunit of dynactin, a multiprotein complex part of a tripartite complex with dynein and a adapter, such as BICDL1, BICD2 or HOOK3. The dynactin complex is built around ACTR1A/ACTB filament and consists of an actin-related filament composed of a shoulder domain, a pointed end and a barbed end. Its length is defined by its flexible shoulder domain. The soulder is composed of 2 DCTN1 subunits, 4 DCTN2 and 2 DCTN3. The 4 DCNT2 (via N-terminus) bind the ACTR1A filament and act as molecular rulers to determine the length. The pointed end is important for binding dynein-dynactin cargo adapters. Consists of 4 subunits: ACTR10, DCNT4, DCTN5 and DCTN6. Within the complex DCTN6 forms a heterodimer with DCTN5. The barbed end is composed of a CAPZA1:CAPZB heterodimers, which binds ACTR1A/ACTB filament and dynactin and stabilizes dynactin. Interacts with PLK1. Interacts with N4BP2L1. Phosphorylation at Thr-186 by CDK1 during mitotic prometaphase creates a binding site for PLK1 that facilitates its recruitment to kinetochores. In terms of tissue distribution, ubiquitous.

It is found in the cytoplasm. The protein resides in the cytoskeleton. The protein localises to the chromosome. Its subcellular location is the centromere. It localises to the kinetochore. Part of the dynactin complex that activates the molecular motor dynein for ultra-processive transport along microtubules. The protein is Dynactin subunit 6 of Homo sapiens (Human).